A 391-amino-acid chain; its full sequence is UPF0229 protein BAA_0633 (391 aa).

Polar residues predominate over residues 1-16 (MGEENQPNYTISQENW). Disordered stretches follow at residues 1–31 (MGEE…RHQE) and 80–117 (HVGQ…GDAA). A compositionally biased stretch (basic and acidic residues) spans 21–31 (KGYDDQQRHQE). The span at 98–115 (GSGGQKQKGPGKGQGAGD) shows a compositional bias: gly residues.

The protein belongs to the UPF0229 family.

The sequence is that of UPF0229 protein BAA_0633 from Bacillus anthracis (strain A0248).